A 207-amino-acid chain; its full sequence is LexA repressor (207 aa).

A DNA-binding region (H-T-H motif) is located at residues 28–47; the sequence is VREIARRFRITPRGAQLHLV. Catalysis depends on for autocatalytic cleavage activity residues S119 and K156.

It belongs to the peptidase S24 family. As to quaternary structure, homodimer.

It catalyses the reaction Hydrolysis of Ala-|-Gly bond in repressor LexA.. Functionally, represses a number of genes involved in the response to DNA damage (SOS response), including recA and lexA. In the presence of single-stranded DNA, RecA interacts with LexA causing an autocatalytic cleavage which disrupts the DNA-binding part of LexA, leading to derepression of the SOS regulon and eventually DNA repair. This is LexA repressor from Thermotoga neapolitana (strain ATCC 49049 / DSM 4359 / NBRC 107923 / NS-E).